Consider the following 141-residue polypeptide: MFMGEYNHIIDAKGRIIVPSKFRDSLGEHFVVTVGLDGCLFVYPNEEWQHFVEQLKNLPGNKEARQLQRYFMAGAADCEVDKQGRILIPGNLRQHAGLDKDIVFVGVLSKIEIWSKERWESNSYDNMDEIADHMSEFGLSF.

SpoVT-AbrB domains are found at residues 5–47 (EYNH…PNEE) and 75–118 (AADC…SKER).

It belongs to the MraZ family. Forms oligomers.

It localises to the cytoplasm. It is found in the nucleoid. This chain is Transcriptional regulator MraZ, found in Lachnoclostridium phytofermentans (strain ATCC 700394 / DSM 18823 / ISDg) (Clostridium phytofermentans).